The primary structure comprises 183 residues: Protein vem-1 (183 aa).

The chain crosses the membrane as a helical span at residues 9-29 (FTMYDAVFLVVVLGFFFYWLT). The 100-residue stretch at 47-146 (MSDMTVEELR…FKYLTVGRLV (100 aa)) folds into the Cytochrome b5 heme-binding domain.

This sequence belongs to the cytochrome b5 family. MAPR subfamily. Interacts with unc-40 (via cytoplasmic domain). As to expression, expressed in the AVG pioneer midline neuron and in several nerve ring neurons that extend projecting axons into the right ventral nerve cord.

Its subcellular location is the membrane. The protein localises to the cell projection. It is found in the axon. Transmembrane protein required for the axon guidance of a subset of ventral nerve cord-associated interneurons and motor neurons. May function with the netrin receptor unc-40 in axon guidance. This Caenorhabditis elegans protein is Protein vem-1.